The following is a 490-amino-acid chain: MSDRLNDQAQHRLQKLLRLKQTNNDPYLVTKTSLTHSSKSFQVEFEKCSEEELKKKATVSLAGRIIAIRQTFLIIQDFDGQVQLYINKKIHPKLFDYFNEFVDIGDQIVVSGKPMLTKTKVLTLAVEEMKIIAKCLLVPPEKWHGLTDIETRARKRFLDLTYNLAMRDVFLKRTKIIKSIRSFLDQNGFIEVETPTLQAVLGGANAKPFKTHYNALKADFYLRIANEIALKKLIIGGFNKVYEMGKMFRNEGVDTTHNPEFTSIEIYQAYADFEVMLVLVEKLIQSLCESLNQFSFNWNNKTINLKTPFHKITMVELIKKVTGIDFNSVKDDQSAILLAEKHHVKLAKHQQNKQHIINLFFEQFCEQTLIEPTFVTHYPKAVSPLAKQDPSNPEFTQRFELFINGKEIANAYSELNDPLEQRKRFEQQLEEKQLGNDETSELDESFLEALSFGMVNTAGLGIGIDRLVMLLCECNSIRDVVFFPQLREHK.

Mg(2+)-binding residues include glutamate 400 and glutamate 407.

Belongs to the class-II aminoacyl-tRNA synthetase family. As to quaternary structure, homodimer. Mg(2+) is required as a cofactor.

The protein resides in the cytoplasm. It carries out the reaction tRNA(Lys) + L-lysine + ATP = L-lysyl-tRNA(Lys) + AMP + diphosphate. The sequence is that of Lysine--tRNA ligase (lysS) from Mycoplasma genitalium (strain ATCC 33530 / DSM 19775 / NCTC 10195 / G37) (Mycoplasmoides genitalium).